The chain runs to 249 residues: MTILFLTMVISYFGCMKAAPMKEVNVHGQGNLAYPGVRTHGTLESVNGPRAGSRGLTTTSLADTFEHVIEELLDEDQKVRPNEENHKDADLYTSRVMLSSQVPLEPPLLFLLEEYKNYLDAANMSMRVRRHSDPARRGELSVCDSISEWVTAADKKTAVDMSGGTVTVLEKVPVSKGQLKQYFYETKCNPMGYTKEGCRGIDKRHWNSQCRTTQSYVRALTMDSKKRIGWRFIRIDTSCVCTLTIKRGR.

A signal peptide spans 1–18 (MTILFLTMVISYFGCMKA). Residues 19-130 (APMKEVNVHG…AANMSMRVRR (112 aa)) constitute a propeptide that is removed on maturation. A glycan (N-linked (GlcNAc...) asparagine) is linked at asparagine 123. Intrachain disulfides connect cysteine 143-cysteine 210, cysteine 188-cysteine 239, and cysteine 198-cysteine 241.

It belongs to the NGF-beta family. Monomers and homodimers. Binds to NTRK2/TRKB. Can form heterodimers with other neurotrophin family members, such as NTF3 and NTF4 (in vitro), but the physiological relevance of this is not clear. BDNF precursor form: interacts with the heterodimer formed by NGFR and SORCS2. Mature BDNF has much lower affinity for the heterodimer formed by NGFR and SORCS2. Post-translationally, N-glycosylated and glycosulfated, contrary to mature BDNF. In terms of processing, mature BDNF is produced by proteolytic removal of the propeptide, catalyzed by a FURIN family member. In addition, the precursor form is proteolytically cleaved within the propeptide, but this is not an obligatory intermediate for the production of mature BDNF. Can be converted into mature BDNF by plasmin (PLG). As to expression, expressed in the dorsal root ganglion and the spinal cord (at protein level). Detected in brain, especially in brain cortex, hippocampus, midbrain and cerebellum.

The protein localises to the secreted. Important signaling molecule that activates signaling cascades downstream of NTRK2. During development, promotes the survival and differentiation of selected neuronal populations of the peripheral and central nervous systems. Participates in axonal growth, pathfinding and in the modulation of dendritic growth and morphology. Major regulator of synaptic transmission and plasticity at adult synapses in many regions of the CNS. The versatility of BDNF is emphasized by its contribution to a range of adaptive neuronal responses including long-term potentiation (LTP), long-term depression (LTD), certain forms of short-term synaptic plasticity, as well as homeostatic regulation of intrinsic neuronal excitability. In terms of biological role, important signaling molecule that activates signaling cascades downstream of NTRK2. Activates signaling cascades via the heterodimeric receptor formed by NGFR and SORCS2. Signaling via NGFR and SORCS2 plays a role in synaptic plasticity and long-term depression (LTD). Binding to NGFR and SORCS2 promotes neuronal apoptosis. Promotes neuronal growth cone collapse. In Mus musculus (Mouse), this protein is Neurotrophic factor BDNF precursor form (Bdnf).